The sequence spans 403 residues: Chorismate synthase (403 aa).

Residues Arg-40 and Arg-46 each coordinate NADP(+). FMN-binding positions include 140-142 (RSS) and 261-262 (QA). A compositionally biased stretch (basic and acidic residues) spans 277–298 (RRGSEAHDEMVRTDEGVDRETN). Positions 277-307 (RRGSEAHDEMVRTDEGVDRETNRAGGLEGGM) are disordered. FMN is bound by residues Gly-305, 320-324 (KPIST), and Arg-346.

This sequence belongs to the chorismate synthase family. In terms of assembly, homotetramer. FMNH2 serves as cofactor.

It carries out the reaction 5-O-(1-carboxyvinyl)-3-phosphoshikimate = chorismate + phosphate. It participates in metabolic intermediate biosynthesis; chorismate biosynthesis; chorismate from D-erythrose 4-phosphate and phosphoenolpyruvate: step 7/7. Catalyzes the anti-1,4-elimination of the C-3 phosphate and the C-6 proR hydrogen from 5-enolpyruvylshikimate-3-phosphate (EPSP) to yield chorismate, which is the branch point compound that serves as the starting substrate for the three terminal pathways of aromatic amino acid biosynthesis. This reaction introduces a second double bond into the aromatic ring system. This is Chorismate synthase from Corynebacterium aurimucosum (strain ATCC 700975 / DSM 44827 / CIP 107346 / CN-1) (Corynebacterium nigricans).